The following is an 872-amino-acid chain: MSILTRWLLIPPVNARLIGRYRDYRRHGASAFSATLGCFWMILAWIFIPLEHPRWQRIRAEHKNLYPHINASRPRPLDPVRYLIQTCWLLIGASRKETPKPRRRAFSGLQNIRGRYHQWMNELPERVSHKTQHLDEKKELGHLSAGARRLILGIIVTFSLILALICVTQPFNPLAQFIFLMLLWGGALIVRRMPGRFSALMLIVLSLTVSCRYIWWRYTSTLNWDDPVSLVCGLILLFAETYAWIVLVLGYFQVVWPLNRQPVPLPKDMSLWPSVDIFVPTYNEDLNVVKNTIYASLGIDWPKDKLNIWILDDGGREEFRQFAQNVGVKYIARTTHEHAKAGNINNALKYAKGEFVSIFDCDHVPTRSFLQMTVGWFLKEKQLAMMQTPHHFFSPDPFERNLGRFRKTPNEGTLFYGLVQDGNDMWDATFFCGSCAVIRRKPLDEIGGIAVETVTEDAHTSLRLHRRGYTSAYMRIPQAAGLATESLSAHIGQRIRWARGMVQIFRLDNPLTGKGLKFAQRLCYVNAMFHFLSGIPRLIFLTAPLAFLLLHAYIIYAPALMIALFVLPHMIHASLTNSKIQGKYRHSFWSEIYETVLAWYIAPPTLVALINPHKGKFNVTAKGGLVEEEYVDWVISRPYIFLVLLNLVGVAVGIWRYFYGPPTEMLTVVVSMVWVFYNLIVLGGAVAVSVESKQVRRSHRVEMTMPAAIAREDGHLFSCTVQDFSDGGLGIKINGQAQILEGQKVNLLLKRGQQEYVFPTQVARVMGNEVGLKLMPLTTQQHIDFVQCTFARADTWALWQDSYPEDKPLESLLDILKLGFRGYRHLAEFAPSSVKGIFRVLTSLVSWVVSFIPRRPERSETAQPSDQALAQQ.

Transmembrane regions (helical) follow at residues 30–50 (SAFS…FIPL), 151–171 (ILGI…TQPF), 173–193 (PLAQ…VRRM), and 230–250 (LVCG…LVLG). The tract at residues 271–364 (LWPSVDIFVP…FVSIFDCDHV (94 aa)) is catalytic subdomain A. Asp313 is an active-site residue. Substrate-binding residues include Asp360 and Asp362. Residues 441-501 (KPLDEIGGIA…GQRIRWARGM (61 aa)) are catalytic subdomain B. Asp457 is an active-site residue. A run of 5 helical transmembrane segments spans residues 525–545 (VNAM…TAPL), 547–567 (FLLL…LFVL), 592–612 (IYET…LINP), 640–660 (IFLV…YFYG), and 668–688 (VVVS…AVAV). The region spanning 694–790 (QVRRSHRVEM…QHIDFVQCTF (97 aa)) is the PilZ domain. A helical membrane pass occupies residues 833–853 (SVKGIFRVLTSLVSWVVSFIP).

The protein belongs to the glycosyltransferase 2 family. Mg(2+) serves as cofactor.

It is found in the cell inner membrane. The catalysed reaction is [(1-&gt;4)-beta-D-glucosyl](n) + UDP-alpha-D-glucose = [(1-&gt;4)-beta-D-glucosyl](n+1) + UDP + H(+). It functions in the pathway glycan metabolism; bacterial cellulose biosynthesis. Its activity is regulated as follows. Activated by bis-(3'-5') cyclic diguanylic acid (c-di-GMP). In terms of biological role, catalytic subunit of cellulose synthase. It polymerizes uridine 5'-diphosphate glucose to cellulose, which is produced as an extracellular component for mechanical and chemical protection at the onset of the stationary phase, when the cells exhibit multicellular behavior (rdar morphotype). Coexpression of cellulose and thin aggregative fimbriae leads to a hydrophobic network with tightly packed cells embedded in a highly inert matrix. This Escherichia coli O157:H7 protein is Cellulose synthase catalytic subunit [UDP-forming] (bcsA).